Reading from the N-terminus, the 113-residue chain is Propane 2-monooxygenase, effector component (113 aa).

The protein belongs to the TmoD/XamoD family. The propane 2-monooxygenase multicomponent enzyme system is composed of an electron transfer component and a monooxygenase component interacting with the effector protein PrmD. The electron transfer component is composed of a reductase (PrmB), and the monooxygenase component is formed by a large subunit (PrmA) and a small subunit (PrmC).

Effector component of the propane 2-monooxygenase multicomponent enzyme system which is involved in the degradation of propane via the O2-dependent hydroxylation of propane. The chain is Propane 2-monooxygenase, effector component from Rhodococcus jostii (strain RHA1).